A 489-amino-acid chain; its full sequence is Protein LMBR1L (489 aa).

The Extracellular segment spans residues 1-21 (MEAPDYEVLSVREQLFHERIR). An interaction with LGB region spans residues 1–59 (MEAPDYEVLSVREQLFHERIRECIISTLLFATLYILCHIFLTRFKKPAEFTTVDDEDAT). The tract at residues 1–76 (MEAPDYEVLS…LCTFTLAIAL (76 aa)) is LCN1-binding. A helical transmembrane segment spans residues 22–42 (ECIISTLLFATLYILCHIFLT). Residues 43-66 (RFKKPAEFTTVDDEDATVNKIALE) are Cytoplasmic-facing. A helical membrane pass occupies residues 67-87 (LCTFTLAIALGAVLLLPFSII). Over 88 to 114 (SNEVLLSLPRNYYIQWLNGSLIHGLWN) the chain is Extracellular. A helical membrane pass occupies residues 115–135 (LVFLFSNLSLIFLMPFAYFFT). Topologically, residues 136-154 (ESEGFAGSRKGVLGRVYET) are cytoplasmic. Residues 155-175 (VVMLMLLTLLVLGMVWVASAI) form a helical membrane-spanning segment. At 176–196 (VDKNKANRESLYDFWEYYLPY) the chain is on the extracellular side. Residues 197 to 217 (LYSCISFLGVLLLLVCTPLGL) form a helical membrane-spanning segment. The Cytoplasmic segment spans residues 218–305 (ARMFSVTGKL…NLGYPLAMLC (88 aa)). Residues 306–326 (LLVLTGLSVLIVAIHILELLI) traverse the membrane as a helical segment. The Extracellular segment spans residues 327–350 (DEAAMPRGMQGTSLGQVSFSKLGS). The helical transmembrane segment at 351–371 (FGAVIQVVLIFYLMVSSVVGF) threads the bilayer. Over 372–388 (YSSPLFRSLRPRWHDTA) the chain is Cytoplasmic. The chain crosses the membrane as a helical span at residues 389–409 (MTQIIGNCVCLLVLSSALPVF). At 410–431 (SRTLGLTRFDLLGDFGRFNWLG) the chain is on the extracellular side. Residues 432–452 (NFYIVFLYNAAFAGLTTLCLV) traverse the membrane as a helical segment. Topologically, residues 453–489 (KTFTAAVRAELIRAFGLDRLPLPVSGFPQASRKTQHQ) are cytoplasmic.

This sequence belongs to the LIMR family. Dimer. Can also form higher oligomers. Interacts with LCN1; this interaction mediates the endocytosis of LCN1. Interacts with UBAC2, FAF2, VCP, AMFR, ZNRF3, CTNNB1, LRP6, GSK3A and GSK3B. Interacts with DVL2 and RNF43. Interaction with SCGB1A1 has been observed in PubMed:16423471, but not in PubMed:23964685. Interaction with LGB which mediates the endocytosis of LGB has been observed in PubMed:17991420, but not in PubMed:23964685. Expressed in testis, pituitary gland, adrenal gland, trachea, placenta, thymus, cerebellum, stomach, mammary gland, spinal cord. A weaker expression is detected in colon, pancreas, and prostate.

The protein resides in the cell membrane. The protein localises to the endoplasmic reticulum membrane. In terms of biological role, plays an essential role in lymphocyte development by negatively regulating the canonical Wnt signaling pathway. In association with UBAC2 and E3 ubiquitin-protein ligase AMFR, promotes the ubiquitin-mediated degradation of CTNNB1 and Wnt receptors FZD6 and LRP6. LMBR1L stabilizes the beta-catenin destruction complex that is required for regulating CTNNB1 levels. Acts as a LCN1 receptor and can mediate its endocytosis. This Homo sapiens (Human) protein is Protein LMBR1L (LMBR1L).